The following is a 319-amino-acid chain: Acetyl esterase (319 aa).

An Involved in the stabilization of the negatively charged intermediate by the formation of the oxyanion hole motif is present at residues 91–93 (HGG). Catalysis depends on residues S165, D262, and H292.

The protein belongs to the 'GDXG' lipolytic enzyme family. As to quaternary structure, homodimer. Interacts with MalT and MelA.

It localises to the cytoplasm. Displays esterase activity towards short chain fatty esters (acyl chain length of up to 8 carbons). Able to hydrolyze triacetylglycerol (triacetin) and tributyrylglycerol (tributyrin), but not trioleylglycerol (triolein) or cholesterol oleate. Negatively regulates MalT activity by antagonizing maltotriose binding. Inhibits MelA galactosidase activity. This is Acetyl esterase from Shigella flexneri.